Reading from the N-terminus, the 175-residue chain is Ribosome maturation factor RimM (175 aa).

A PRC barrel domain is found at Glu-103–Phe-175.

This sequence belongs to the RimM family. As to quaternary structure, binds ribosomal protein uS19.

It localises to the cytoplasm. An accessory protein needed during the final step in the assembly of 30S ribosomal subunit, possibly for assembly of the head region. Essential for efficient processing of 16S rRNA. May be needed both before and after RbfA during the maturation of 16S rRNA. It has affinity for free ribosomal 30S subunits but not for 70S ribosomes. This Nitrosococcus oceani (strain ATCC 19707 / BCRC 17464 / JCM 30415 / NCIMB 11848 / C-107) protein is Ribosome maturation factor RimM.